The primary structure comprises 331 residues: Thiamine thiazole synthase (331 aa).

Residues Ser-82, 103–104 (EA), Gly-111, and Val-176 contribute to the substrate site. Residue Cys-210 is modified to 2,3-didehydroalanine (Cys). Residues Asp-212, His-242, Met-296, and 306-308 (RMG) each bind substrate.

This sequence belongs to the THI4 family. Homooctamer. Fe cation serves as cofactor. Post-translationally, during the catalytic reaction, a sulfide is transferred from Cys-210 to a reaction intermediate, generating a dehydroalanine residue.

It is found in the cytoplasm. It localises to the nucleus. The catalysed reaction is [ADP-thiazole synthase]-L-cysteine + glycine + NAD(+) = [ADP-thiazole synthase]-dehydroalanine + ADP-5-ethyl-4-methylthiazole-2-carboxylate + nicotinamide + 3 H2O + 2 H(+). In terms of biological role, involved in biosynthesis of the thiamine precursor thiazole. Catalyzes the conversion of NAD and glycine to adenosine diphosphate 5-(2-hydroxyethyl)-4-methylthiazole-2-carboxylic acid (ADT), an adenylated thiazole intermediate. The reaction includes an iron-dependent sulfide transfer from a conserved cysteine residue of the protein to a thiazole intermediate. The enzyme can only undergo a single turnover, which suggests it is a suicide enzyme. May have additional roles in adaptation to various stress conditions and in DNA damage tolerance. The chain is Thiamine thiazole synthase from Eremothecium gossypii (strain ATCC 10895 / CBS 109.51 / FGSC 9923 / NRRL Y-1056) (Yeast).